The following is a 374-amino-acid chain: S-adenosylmethionine:tRNA ribosyltransferase-isomerase (374 aa).

It belongs to the QueA family. Monomer.

It is found in the cytoplasm. It catalyses the reaction 7-aminomethyl-7-carbaguanosine(34) in tRNA + S-adenosyl-L-methionine = epoxyqueuosine(34) in tRNA + adenine + L-methionine + 2 H(+). Its pathway is tRNA modification; tRNA-queuosine biosynthesis. Functionally, transfers and isomerizes the ribose moiety from AdoMet to the 7-aminomethyl group of 7-deazaguanine (preQ1-tRNA) to give epoxyqueuosine (oQ-tRNA). The polypeptide is S-adenosylmethionine:tRNA ribosyltransferase-isomerase (Sorangium cellulosum (strain So ce56) (Polyangium cellulosum (strain So ce56))).